Consider the following 352-residue polypeptide: MSRGTMPQPGAWPGASCAETPAREAGAAARDGGKVTAGAQPRAATRCPAEHEEDMYRAADEIEKEKELLIHERGISEPRLSVAPEMDIMDYCKKEWRGNTQKATCMKKGYEEVSQKFTSIRRVRGDNYCALRATLFQAMSQLAELPPWLQDLELILLPEKLINKYTWIKQWKLGLKFDGKSEDLVEKIKESLALLRKKWVSLAAMKTAEARQTACDELFTNEEEEYSLYEAVKFLMLNRAIELYDDKEKGKEVPFFSVLLFARDTSNDPEQLLRNHLNQVGHTGGLEQVEMFLLAYAVRHSIRVYRLSKYNTEEFITVYPTDPPKDWPMVTLIAEDDRHYNIPVRVCEETSV.

Residues 1–49 (MSRGTMPQPGAWPGASCAETPAREAGAAARDGGKVTAGAQPRAATRCPA) form a disordered region. Over residues 18-30 (AETPAREAGAAAR) the composition is skewed to low complexity. The stretch at 49–73 (AEHEEDMYRAADEIEKEKELLIHER) forms a coiled coil. The short motif at 52 to 57 (EEDMYR) is the PIM motif element. Phosphotyrosine is present on Tyr-56. Linear diubiquitin binding regions lie at residues 95–96 (EW) and 124–126 (RGD). In terms of domain architecture, OTU spans 118–346 (TSIRRVRGDN…DRHYNIPVRV (229 aa)). Asp-126 is an active-site residue. The active-site Nucleophile is the Cys-129. 3 linear diubiquitin binding regions span residues 255–259 (FFSVL), 283–289 (TGGLEQV), and 336–338 (DDR). His-339 is a catalytic residue. Positions 349-352 (ETSV) match the PDZ-binding motif.

This sequence belongs to the peptidase C65 family. Otulin subfamily. Interacts (via the PUB domain) with RNF31 (via the PIM motif); the interaction is direct. Interacts with DVL2. Post-translationally, ubiquitinated. In terms of processing, acetylated. Phosphorylated. Phosphorylation at Tyr-56 prevents interaction with RNF31; dephosphorylation promotes interaction with RNF31 and the LUBAC complex.

It is found in the cytoplasm. It catalyses the reaction Thiol-dependent hydrolysis of ester, thioester, amide, peptide and isopeptide bonds formed by the C-terminal Gly of ubiquitin (a 76-residue protein attached to proteins as an intracellular targeting signal).. Its function is as follows. Deubiquitinase that specifically removes linear ('Met-1'-linked) polyubiquitin chains to substrates and acts as a regulator of angiogenesis and innate immune response. Required during angiogenesis, craniofacial and neuronal development by regulating the canonical Wnt signaling together with the LUBAC complex. Acts as a negative regulator of NF-kappa-B by regulating the activity of the LUBAC complex. OTULIN function is mainly restricted to homeostasis of the LUBAC complex: acts by removing 'Met-1'-linked autoubiquitination of the LUBAC complex, thereby preventing inactivation of the LUBAC complex. Acts as a key negative regulator of inflammation by restricting spontaneous inflammation and maintaining immune homeostasis. In myeloid cell, required to prevent unwarranted secretion of cytokines leading to inflammation and autoimmunity by restricting linear polyubiquitin formation. Plays a role in innate immune response by restricting linear polyubiquitin formation on LUBAC complex in response to NOD2 stimulation, probably to limit NOD2-dependent pro-inflammatory signaling. The protein is Ubiquitin thioesterase otulin of Mus musculus (Mouse).